Consider the following 498-residue polypeptide: Sugar transport protein 2 (498 aa).

Residues 1 to 22 (MAVGSMNVEEGTKAFPAKLTGQ) are Cytoplasmic-facing. The next 12 membrane-spanning stretches (helical) occupy residues 23–43 (VFLC…DIGI), 80–100 (LLQL…FISS), 117–137 (IFFL…MLIG), 140–160 (ILLG…ISEI), 167–187 (GGLN…ASYV), 200–220 (YSLG…FFIH), 288–308 (LQFF…PVLF), 320–340 (ISTV…LLVV), 348–368 (LLME…GILL), 381–401 (AVPL…AWSW), 421–441 (GYFC…QFFL), and 450–470 (LLFF…VFFL). The Cytoplasmic portion of the chain corresponds to 471–498 (PETKGVPIEEMAEKRWKTHPRWKKYFKD).

It belongs to the major facilitator superfamily. Sugar transporter (TC 2.A.1.1) family. In terms of tissue distribution, pollen specific (at protein level).

The protein resides in the membrane. Its function is as follows. Mediates an active uptake of hexoses, probably by sugar/hydrogen symport. Can transport glucose, 3-O-methylglucose, xylose, mannose, fructose and galactose. This chain is Sugar transport protein 2 (STP2), found in Arabidopsis thaliana (Mouse-ear cress).